Reading from the N-terminus, the 128-residue chain is UPF0102 protein RPB_0420 (128 aa).

The protein belongs to the UPF0102 family.

This is UPF0102 protein RPB_0420 from Rhodopseudomonas palustris (strain HaA2).